A 295-amino-acid chain; its full sequence is ATP synthase gamma chain (295 aa).

The protein belongs to the ATPase gamma chain family. F-type ATPases have 2 components, CF(1) - the catalytic core - and CF(0) - the membrane proton channel. CF(1) has five subunits: alpha(3), beta(3), gamma(1), delta(1), epsilon(1). CF(0) has three main subunits: a, b and c.

The protein resides in the cell inner membrane. In terms of biological role, produces ATP from ADP in the presence of a proton gradient across the membrane. The gamma chain is believed to be important in regulating ATPase activity and the flow of protons through the CF(0) complex. The polypeptide is ATP synthase gamma chain (Aliarcobacter butzleri (strain RM4018) (Arcobacter butzleri)).